A 336-amino-acid polypeptide reads, in one-letter code: MLKEALEVVTAKRDLDYGQVKNLLDSILEGELDEMKFGAFLAALKTKGETKEEISAFVDAFYEKAQKIEYTHPKTIDTCGTGGDGKGTFNISTASAIVLSCFDLKVAKHGNRSITSNSGSADILENLGIDIQAPPQRILEGLEKHNFAFLFAPKYHPATKKVATVRKSLGIRTVFNILGPLLNPVSLNYQVVGAFDFEAQEKIASVLKGKRKRAAIIHSLDGLDEISVSQKTRVLELQGDNIKEYYIDPKEYGIEYTLDDIKGYTPQENAKIFRSILNGEVSAYYWAVVLNSAFALYIAEVANDIEEGIALCQSAIKKGDAMLKLKDLQQHYKVGA.

5-phospho-alpha-D-ribose 1-diphosphate contacts are provided by residues G80, 83 to 84 (GD), T88, 90 to 93 (NIST), 108 to 116 (KHGNRSITS), and S120. G80 contributes to the anthranilate binding site. S92 is a binding site for Mg(2+). N111 is an anthranilate binding site. R166 is a binding site for anthranilate. Mg(2+) contacts are provided by D224 and E225.

The protein belongs to the anthranilate phosphoribosyltransferase family. As to quaternary structure, homodimer. It depends on Mg(2+) as a cofactor.

The catalysed reaction is N-(5-phospho-beta-D-ribosyl)anthranilate + diphosphate = 5-phospho-alpha-D-ribose 1-diphosphate + anthranilate. It functions in the pathway amino-acid biosynthesis; L-tryptophan biosynthesis; L-tryptophan from chorismate: step 2/5. Its function is as follows. Catalyzes the transfer of the phosphoribosyl group of 5-phosphorylribose-1-pyrophosphate (PRPP) to anthranilate to yield N-(5'-phosphoribosyl)-anthranilate (PRA). This chain is Anthranilate phosphoribosyltransferase, found in Caldicellulosiruptor saccharolyticus (strain ATCC 43494 / DSM 8903 / Tp8T 6331).